Reading from the N-terminus, the 53-residue chain is UPF0391 membrane protein Bxeno_A2958 (53 aa).

2 helical membrane passes run 5 to 25 (AIVFFVIAIIAAVFGFTGIAA) and 30 to 50 (IAKILFYIFLVVFVVTLLLGV).

It belongs to the UPF0391 family.

The protein localises to the cell membrane. The polypeptide is UPF0391 membrane protein Bxeno_A2958 (Paraburkholderia xenovorans (strain LB400)).